Consider the following 390-residue polypeptide: 3-ketoacyl-CoA thiolase (390 aa).

Cys-95 functions as the Acyl-thioester intermediate in the catalytic mechanism. Catalysis depends on proton acceptor residues His-346 and Cys-376.

Belongs to the thiolase-like superfamily. Thiolase family. In terms of assembly, heterotetramer of two alpha chains (FadB) and two beta chains (FadA).

It localises to the cytoplasm. It catalyses the reaction an acyl-CoA + acetyl-CoA = a 3-oxoacyl-CoA + CoA. Its pathway is lipid metabolism; fatty acid beta-oxidation. Functionally, catalyzes the final step of fatty acid oxidation in which acetyl-CoA is released and the CoA ester of a fatty acid two carbons shorter is formed. The sequence is that of 3-ketoacyl-CoA thiolase from Psychrobacter cryohalolentis (strain ATCC BAA-1226 / DSM 17306 / VKM B-2378 / K5).